A 293-amino-acid polypeptide reads, in one-letter code: Small ribosomal subunit protein uS2m (293 aa).

Positions 21–38 are enriched in low complexity; that stretch reads GRAAQRGRTLGSAAAAAA. Disordered regions lie at residues 21-49 and 263-293; these read GRAAQRGRTLGSAAAAAAREPERDSDRSA and QGAPGPHPANPAAPGAPSPGAQAQLGMGHSP. Residues 39 to 49 are compositionally biased toward basic and acidic residues; it reads REPERDSDRSA. The span at 267–279 shows a compositional bias: pro residues; sequence GPHPANPAAPGAP.

It belongs to the universal ribosomal protein uS2 family. In terms of assembly, component of the mitochondrial ribosome small subunit (28S) which comprises a 12S rRNA and about 30 distinct proteins.

It localises to the mitochondrion. In terms of biological role, required for mitoribosome formation and stability, and mitochondrial translation. This chain is Small ribosomal subunit protein uS2m (MRPS2), found in Bos taurus (Bovine).